The chain runs to 229 residues: MDYNGVLVGLGNPGARYEGTRHNCGFALIDAFVDFGYRHGTVDEMNGGKFSCQLWRVRLPRLDGCWLAAKPQTFMNLSGQCVQPLLSWHKLKAADLVVAHDELDIPPGELRFKFGGGNAGHNGLKSITELLGTPDFYRLRMGIGRPPHKGDVTNWVLGRPQGEDAENLDHILPLALDVLFAFADKGLDSAVRLAGKTTRPRKPVRQTANAEASNNSPEASATPQNKDNT.

Tyrosine 17 lines the tRNA pocket. The Proton acceptor role is filled by histidine 22. 3 residues coordinate tRNA: phenylalanine 74, asparagine 76, and asparagine 122. The disordered stretch occupies residues 194-229 (AGKTTRPRKPVRQTANAEASNNSPEASATPQNKDNT). Over residues 207–223 (TANAEASNNSPEASATP) the composition is skewed to low complexity.

Belongs to the PTH family. In terms of assembly, monomer.

The protein resides in the cytoplasm. The enzyme catalyses an N-acyl-L-alpha-aminoacyl-tRNA + H2O = an N-acyl-L-amino acid + a tRNA + H(+). In terms of biological role, hydrolyzes ribosome-free peptidyl-tRNAs (with 1 or more amino acids incorporated), which drop off the ribosome during protein synthesis, or as a result of ribosome stalling. Its function is as follows. Catalyzes the release of premature peptidyl moieties from peptidyl-tRNA molecules trapped in stalled 50S ribosomal subunits, and thus maintains levels of free tRNAs and 50S ribosomes. In Desulfovibrio desulfuricans (strain ATCC 27774 / DSM 6949 / MB), this protein is Peptidyl-tRNA hydrolase.